Here is a 279-residue protein sequence, read N- to C-terminus: uncharacterized protein (279 aa).

Positions asparagine 233–isoleucine 279 are disordered. Polar residues predominate over residues valine 246–leucine 259. Over residues asparagine 260 to asparagine 271 the composition is skewed to low complexity.

This is an uncharacterized protein from Buchnera aphidicola subsp. Baizongia pistaciae (strain Bp).